The sequence spans 106 residues: uncharacterized protein (106 aa).

4 helical membrane passes run 3 to 23 (WFLLVIAGIEEIIAAIAMKYI), 29 to 49 (KWPIIVMTVGFGLSFYCLSQA), 50 to 70 (MIVLPAGVAYAVWTGIGSIGV), and 82 to 102 (FQLSQVISLCLILAGVIGLRL).

The protein belongs to the drug/metabolite transporter (DMT) superfamily. Small multidrug resistance (SMR) (TC 2.A.7.1) family.

It is found in the cell membrane. This is an uncharacterized protein from Bacillus subtilis (strain 168).